We begin with the raw amino-acid sequence, 447 residues long: Rab GDP dissociation inhibitor alpha (447 aa).

It belongs to the Rab GDI family. Interacts with RHOH. Interacts with the non-phosphorylated forms of RAB1A, RAB3A, RAB5A, RAB5B, RAB5C, RAB8A, RAB8B, RAB10, RAB12, RAB35, and RAB43. In terms of tissue distribution, brain; predominant in neural and sensory tissues.

The protein resides in the cytoplasm. It is found in the golgi apparatus. Its subcellular location is the trans-Golgi network. Its function is as follows. Regulates the GDP/GTP exchange reaction of most Rab proteins by inhibiting the dissociation of GDP from them, and the subsequent binding of GTP to them. Promotes the dissociation of GDP-bound Rab proteins from the membrane and inhibits their activation. Promotes the dissociation of RAB1A, RAB3A, RAB5A and RAB10 from membranes. The protein is Rab GDP dissociation inhibitor alpha (GDI1) of Homo sapiens (Human).